A 453-amino-acid polypeptide reads, in one-letter code: Prenyltransferase nscD (453 aa).

Positions 118, 200, 202, 271, 273, and 428 each coordinate dimethylallyl diphosphate.

Belongs to the tryptophan dimethylallyltransferase family.

It participates in secondary metabolite biosynthesis. In terms of biological role, prenyltransferase; part of the gene cluster that mediates the biosynthesis of neosartoricin, a prenylated anthracenone that exhibits T-cell antiproliferative activity, suggestive of a physiological role as an immunosuppressive agent. The non-reducing polyketide synthase nscA probably synthesizes and cyclizes the decaketide backbone. The hydrolase nscB then mediates the product release through hydrolysis followed by spontaneous decarboxylation. The prenyltransferase nscD catalyzes the addition of the dimethylallyl group to the aromatic C5. The FAD-dependent monooxygenase nscC is then responsible for the stereospecific hydroxylation at C2. There is no gene encoding O-acetyltransferase in the nsc gene cluster; thus, the last step of 2-O-acetylation leading to neosartoricin may be catalyzed by an unidentified O-acetyltransferase. This is Prenyltransferase nscD from Aspergillus fumigatus (strain ATCC MYA-4609 / CBS 101355 / FGSC A1100 / Af293) (Neosartorya fumigata).